The primary structure comprises 304 residues: Probable 5-dehydro-4-deoxyglucarate dehydratase (304 aa).

This sequence belongs to the DapA family.

It catalyses the reaction 5-dehydro-4-deoxy-D-glucarate + H(+) = 2,5-dioxopentanoate + CO2 + H2O. It participates in carbohydrate acid metabolism; D-glucarate degradation; 2,5-dioxopentanoate from D-glucarate: step 2/2. The polypeptide is Probable 5-dehydro-4-deoxyglucarate dehydratase (Methylobacterium radiotolerans (strain ATCC 27329 / DSM 1819 / JCM 2831 / NBRC 15690 / NCIMB 10815 / 0-1)).